The primary structure comprises 292 residues: Probable starch degradation products transport system permease protein AmyD (292 aa).

6 consecutive transmembrane segments (helical) span residues 15 to 35 (WLFI…PFII), 77 to 97 (FAVA…MLVT), 110 to 130 (FYLP…FIFV), 156 to 176 (FWGL…VIYI), 205 to 225 (VFPL…SNSF), and 260 to 280 (MAVG…ISVI). The ABC transmembrane type-1 domain occupies 71–281 (IIFTAKFAVA…LIIAVISVIQ (211 aa)).

This sequence belongs to the binding-protein-dependent transport system permease family. MalFG subfamily.

The protein resides in the cell membrane. Functionally, probably part of a binding-protein-dependent transport system starch degradation products. Probably responsible for the translocation of the substrate across the membrane. In Thermoanaerobacterium thermosulfurigenes (Clostridium thermosulfurogenes), this protein is Probable starch degradation products transport system permease protein AmyD (amyD).